Here is a 155-residue protein sequence, read N- to C-terminus: Protein FAM162A (155 aa).

The tract at residues 77-103 (RFKKEEEIPETISFEMLDAAKNKLRVK) is required for proapoptotic activity. Residues 104 to 121 (VSYLMIALTVAGCIYMVI) form a helical membrane-spanning segment.

Belongs to the UPF0389 family. Interacts with HSP90AB1; HSP90AB1 is essential for FAM162A mitochondrial localization and pro-apoptotic activity. Interacts with VDAC2; the interaction is probably involved in inducing mitochondrial permeability transition.

It localises to the mitochondrion membrane. Proposed to be involved in regulation of apoptosis; the exact mechanism may differ between cell types/tissues. May be involved in hypoxia-induced cell death of transformed cells implicating cytochrome C release and caspase activation (such as CASP9) and inducing mitochondrial permeability transition. May be involved in hypoxia-induced cell death of neuronal cells probably by promoting release of AIFM1 from mitochondria to cytoplasm and its translocation to the nucleus; however, the involvement of caspases has been reported conflictingly. This is Protein FAM162A (Fam162a) from Mus musculus (Mouse).